Consider the following 53-residue polypeptide: Metallocarboxypeptidase inhibitor (53 aa).

3 cysteine pairs are disulfide-bonded: cysteine 9/cysteine 23, cysteine 15/cysteine 51, and cysteine 27/cysteine 38. Alanine 53 is a binding site for Zn(2+).

Monomer. Interacts (via C-terminus) with human CPA4.

Its function is as follows. Metallocarboxypeptidase inhibitor. Has an inhibitory effect on bovine CPA1 and CPB2, human CPA1, CPA2, CPA4, CPB1 and CPB2, and porcine CPB1. Does not inhibit D.melanogaster svr (carboxypeptidase D). Shows no activity against serine proteases subtilisin or bovine trypsin, cysteine protease papain, and aspartyl protease porcine pepsin. The chain is Metallocarboxypeptidase inhibitor from Nerita versicolor (Four-tooth nerite).